Reading from the N-terminus, the 1450-residue chain is Actin cytoskeleton-regulatory complex protein PAN1 (1450 aa).

Residues 1–140 (MYSNPNNFFG…PPPPVKPQAT (140 aa)) form a disordered region. Composition is skewed to low complexity over residues 15–37 (GPGA…QQPD) and 59–71 (PGLQ…LQPQ). Residues 72 to 83 (FTGYGQTPQQGM) show a composition bias toward polar residues. Over residues 93–119 (IPQQYQQQFQQQQTQQQQPQQQQMPFA) the composition is skewed to low complexity. Pro residues predominate over residues 120-136 (AAPPQPTQTLAPPPPVK). EH domains lie at 181–270 (DQAK…VSSM) and 444–533 (EKTR…STRN). EF-hand domains lie at 214–249 (LDGD…CNLK) and 477–512 (LEKP…IYRK). Disordered regions lie at residues 600 to 625 (RSSA…SNEE), 788 to 851 (SDQD…WEDA), and 865 to 1450 (LQRS…RVLD). A coiled-coil region spans residues 622-741 (SNEELSLDQL…ELFRLKDAKA (120 aa)). Residues 788–850 (SDQDAEKRLE…TEHEKRRWED (63 aa)) show a composition bias toward basic and acidic residues. Residues 902–924 (SPASISRTASPAAPPAAGGSYSS) show a composition bias toward low complexity. The stretch at 960 to 1148 (ETAAQRAERE…LEAMDDDSSS (189 aa)) forms a coiled coil. Composition is skewed to basic and acidic residues over residues 965–997 (RAER…RLAE), 1026–1101 (AKPD…EEEK), and 1110–1140 (EAKE…RQLE). The segment covering 1141 to 1153 (AMDDDSSSDDEGP) has biased composition (acidic residues). Residues 1156-1169 (ITPQASTPTMNDSH) are compositionally biased toward polar residues. Pro residues-rich tracts occupy residues 1178 to 1188 (QPTPPPAPVVS) and 1222 to 1239 (APAP…PPQP). A compositionally biased stretch (basic and acidic residues) spans 1265 to 1275 (RRPDDDGWGSD). Residues 1276-1285 (KDEEDEESDD) are compositionally biased toward acidic residues. Polar residues predominate over residues 1314–1323 (GDKSATSPTV). Composition is skewed to pro residues over residues 1327–1352 (VAPP…PMPG), 1361–1375 (PGAP…PPMP), and 1381–1411 (PGAP…PPAA). One can recognise a WH2 domain in the interval 1417–1434 (RPAGLLGQIQAGKALKKT).

It belongs to the PAN1 family. Component of the PAN1 actin cytoskeleton-regulatory complex.

It localises to the cell membrane. The protein resides in the endosome membrane. It is found in the cytoplasm. Its subcellular location is the cytoskeleton. The protein localises to the actin patch. In terms of biological role, component of the PAN1 actin cytoskeleton-regulatory complex required for the internalization of endosomes during actin-coupled endocytosis. The complex links the site of endocytosis to the cell membrane-associated actin cytoskeleton. Mediates uptake of external molecules and vacuolar degradation of plasma membrane proteins. Plays a role in the proper organization of the cell membrane-associated actin cytoskeleton and promotes its destabilization. This is Actin cytoskeleton-regulatory complex protein PAN1 (PAN1) from Chaetomium globosum (strain ATCC 6205 / CBS 148.51 / DSM 1962 / NBRC 6347 / NRRL 1970) (Soil fungus).